A 74-amino-acid chain; its full sequence is MLCLPVFIILLLLASPAAPNPLETRIQRDLIRAALEDADMKTNERFLEGVISTIKDFAGKVCCSVSVNFCCPTA.

Positions 1-19 are cleaved as a signal peptide; sequence MLCLPVFIILLLLASPAAP. Positions 20–60 are excised as a propeptide; that stretch reads NPLETRIQRDLIRAALEDADMKTNERFLEGVISTIKDFAGK.

Belongs to the conotoxin T superfamily. Contains 2 disulfide bonds that can be either 'C1-C3, C2-C4' or 'C1-C4, C2-C3', since these disulfide connectivities have been observed for conotoxins with cysteine framework V (for examples, see AC P0DQQ7 and AC P81755). As to expression, expressed by the venom duct.

Its subcellular location is the secreted. The polypeptide is Conotoxin TsMLCL-04 (Conus tessulatus (Tessellate cone)).